The primary structure comprises 313 residues: Syndecan-1 (313 aa).

The N-terminal stretch at 1–22 (MRRAALWLWLCALALRLQPALP) is a signal peptide. Residues 23-257 (QIVTANVPPE…GLLDRKEVLG (235 aa)) are Extracellular-facing. Disordered regions lie at residues 27 to 58 (ANVPPEDQDGSGDDSDNFSGSGTGALPDMTLS) and 95 to 186 (AGEK…VEDG). Positions 32 to 42 (EDQDGSGDDSD) are enriched in acidic residues. The O-linked (Xyl...) (chondroitin sulfate) serine glycan is linked to serine 37. Asparagine 43 is a glycosylation site (N-linked (GlcNAc...) asparagine). O-linked (Xyl...) (heparan sulfate) serine glycosylation is found at serine 45 and serine 47. A compositionally biased stretch (basic and acidic residues) spans 97–129 (EKPEEGEPVAHVEAEPDFTARDKEKEATTRPRE). Low complexity predominate over residues 135–154 (VTQQASTAARATTAQASVTS). O-linked (Xyl...) (chondroitin sulfate) serine glycosylation is found at serine 209 and serine 219. A helical transmembrane segment spans residues 258–278 (GVIAGGLVGLIFAVCLVAFML). The Cytoplasmic portion of the chain corresponds to 279 to 313 (YRMKKKDEGSYSLEEPKQANGGAYQKPTKQEEFYA). The span at 286 to 295 (EGSYSLEEPK) shows a compositional bias: basic and acidic residues. The disordered stretch occupies residues 286–313 (EGSYSLEEPKQANGGAYQKPTKQEEFYA). Residue serine 288 is modified to Phosphoserine.

This sequence belongs to the syndecan proteoglycan family. As to quaternary structure, interacts with CDCP1. Interacts (via C-terminus) with TIAM1 (via PDZ domain). Interacts with MDK. Shedding is enhanced by a number of factors such as heparanase, thrombin or EGF. Also by stress and wound healing. PMA-mediated shedding is inhibited by TIMP3.

The protein localises to the membrane. It localises to the secreted. The protein resides in the extracellular exosome. Cell surface proteoglycan that contains both heparan sulfate and chondroitin sulfate and that links the cytoskeleton to the interstitial matrix. Regulates exosome biogenesis in concert with SDCBP and PDCD6IP. Able to induce its own expression in dental mesenchymal cells and also in the neighboring dental epithelial cells via an MSX1-mediated pathway. This Rattus norvegicus (Rat) protein is Syndecan-1.